A 237-amino-acid chain; its full sequence is 7-cyano-7-deazaguanine synthase (237 aa).

ATP is bound at residue 14–24 (FSGGQDSATCL). Zn(2+) contacts are provided by Cys202, Cys217, Cys220, and Cys223.

The protein belongs to the QueC family. Zn(2+) is required as a cofactor.

It carries out the reaction 7-carboxy-7-deazaguanine + NH4(+) + ATP = 7-cyano-7-deazaguanine + ADP + phosphate + H2O + H(+). It participates in purine metabolism; 7-cyano-7-deazaguanine biosynthesis. Catalyzes the ATP-dependent conversion of 7-carboxy-7-deazaguanine (CDG) to 7-cyano-7-deazaguanine (preQ(0)). This chain is 7-cyano-7-deazaguanine synthase, found in Rhodopseudomonas palustris (strain ATCC BAA-98 / CGA009).